A 94-amino-acid chain; its full sequence is Large ribosomal subunit protein bL27 (94 aa).

Positions 1 to 25 are disordered; sequence MAHKKGTGSTRNGRDSQSKRLGVKR.

This sequence belongs to the bacterial ribosomal protein bL27 family.

The sequence is that of Large ribosomal subunit protein bL27 from Gloeothece citriformis (strain PCC 7424) (Cyanothece sp. (strain PCC 7424)).